The chain runs to 408 residues: MGNCWCRFEPLNHRVSANAKSESPKEQSPTVEDKHIKEVQKLPSNPKEVEDLRRDSAANPLIAFTYEELKNITSNFRQDRVLGGGGFGSVYKGFIKEDLGDQEVPEPLPVAVKVHDGDNSFQGHREWLAEVIFLGQLSHPNLVKLIGYCCEDNHRVLIYEYMARGSVENNLFSRVLLPLSWAIRMKIAFGAAKGLAFLHEAKKPVIYRDFKTSNILLDMDYNAKLSDFGLAKDGPVGDKSHVSTRIMGTYGYAAPEYIMTGHLTPGSDVYSFGVVLLELLTGRKSLDKSRPTREQNLIDWALPLLKEKKKVLNIVDPKMNCEYPVKAVQKAAMLAYHCLNRNPKARPLMRDIVDSLEPLQATEEEALLVPPVQKAVITIIDEMPKNGLKKVEELKKVEEVKKVIEDAC.

Gly-2 is lipidated: N-myristoyl glycine. A lipid anchor (S-palmitoyl cysteine) is attached at Cys-4. Positions 17–50 (ANAKSESPKEQSPTVEDKHIKEVQKLPSNPKEVE) are disordered. Positions 18–30 (NAKSESPKEQSPT) are enriched in polar residues. The segment covering 31 to 40 (VEDKHIKEVQ) has biased composition (basic and acidic residues). Thr-65 is subject to Phosphothreonine. One can recognise a Protein kinase domain in the interval 76 to 360 (FRQDRVLGGG…DIVDSLEPLQ (285 aa)). ATP-binding positions include 82–90 (LGGGGFGSV) and Lys-113. Tyr-159 carries the post-translational modification Phosphotyrosine. Asp-209 (proton acceptor) is an active-site residue. Ser-213 and Ser-243 each carry phosphoserine. Phosphothreonine is present on residues Thr-244 and Thr-249. Position 257 is a phosphotyrosine (Tyr-257).

This sequence belongs to the protein kinase superfamily. Ser/Thr protein kinase family. In terms of processing, palmitoylation at Cys-4 and Cys-6 are required for plasma membrane location.

The protein localises to the cell membrane. The enzyme catalyses L-seryl-[protein] + ATP = O-phospho-L-seryl-[protein] + ADP + H(+). It carries out the reaction L-threonyl-[protein] + ATP = O-phospho-L-threonyl-[protein] + ADP + H(+). May be involved in plant defense signaling. This is Probable serine/threonine-protein kinase PBL16 from Arabidopsis thaliana (Mouse-ear cress).